The chain runs to 348 residues: MASFVARLTLALSFIALALAGYSLVQNTLSSPTHTRLNLIPTWLDSTFDSADVLSYLGFGKSSGRLSDSNCVFSAVKEIVDAAITAETRMGASLIRLHFHDCFVDGCDGGILLNDTANFTGEQGAPANSNSVRGFSVIDQAKRNAQTKCADTPVSCADVLAIAARDAFRKFTNQTYNITLGRQDARTANLTGANTQLPAPFDNLSIQTAKFADKGFNQREMVVLAGAHTVGFSRCAVLCTSTNLNQNRSATLQCTCPASANDTGLVGLDPSPGTFDKKYFEELVKGQGLLFSDQELMQSNATVTAVRRYRDATGAFLTDFAAAMVKMSNLPPSAGVQLEIRNVCSRVN.

Residues Met1–Ala20 form the signal peptide. The propeptide occupies Gly21–Ser67. Disulfide bonds link Cys71/Cys149, Cys102/Cys107, Cys156/Cys344, and Cys235/Cys256. His100 functions as the Proton acceptor in the catalytic mechanism. Ca(2+) contacts are provided by Asp101, Val104, Gly106, and Asp108. 5 N-linked (GlcNAc...) asparagine glycosylation sites follow: Asn114, Asn118, Asn173, Asn177, and Asn189. Residue Pro198 coordinates substrate. Asn203 carries an N-linked (GlcNAc...) asparagine glycan. Heme b is bound at residue His228. Thr229 is a binding site for Ca(2+). Residues Asn247 and Asn261 are each glycosylated (N-linked (GlcNAc...) asparagine). Asp269, Ser271, and Asp276 together coordinate Ca(2+). N-linked (GlcNAc...) asparagine glycosylation occurs at Asn300.

The protein belongs to the peroxidase family. Classical plant (class III) peroxidase subfamily. Requires Ca(2+) as cofactor. Heme b serves as cofactor. Highly expressed in suspension cultured cells. Weak expression also found in the stems of intact plants. No expression in leaf, tuberous root and non-tuberous root.

The protein resides in the secreted. It catalyses the reaction 2 a phenolic donor + H2O2 = 2 a phenolic radical donor + 2 H2O. Its function is as follows. Removal of H(2)O(2), oxidation of toxic reductants, biosynthesis and degradation of lignin, suberization, auxin catabolism, response to environmental stresses such as wounding, pathogen attack and oxidative stress. These functions might be dependent on each isozyme/isoform in each plant tissue. May contribute to protection against cold-induced oxidative stress. In Ipomoea batatas (Sweet potato), this protein is Neutral peroxidase.